The sequence spans 223 residues: TMF-regulated nuclear protein 1 (223 aa).

Disordered stretches follow at residues 1–84 (MPGC…GPAG) and 196–223 (GRLR…SPQR). Residues 21-54 (GSPPPPPREPLPSLQPPSPSPTSTPTPTKSPPLP) are compositionally biased toward pro residues. Gly residues predominate over residues 73 to 84 (ASGGSGGAGPAG).

Interacts with TMF1; may regulate TRNP1 proteasomal degradation. Post-translationally, ubiquitinated, leading to its degradation by the proteasome. Expressed in brain and kidney (at protein level). Also detected in spleen and intestine.

The protein localises to the nucleus. DNA-binding factor that regulates the expression of a subset of genes and plays a key role in tangential, radial, and lateral expansion of the brain neocortex. Regulates neural stem cells proliferation and the production of intermediate neural progenitors and basal radial glial cells affecting the process of cerebral cortex gyrification. May control the proliferation rate of cells by regulating their progression through key cell-cycle transition points. The sequence is that of TMF-regulated nuclear protein 1 (Trnp1) from Mus musculus (Mouse).